The primary structure comprises 381 residues: Adaptive-response sensory kinase SasA (381 aa).

The 214-residue stretch at 154 to 367 (MVAHELRTPL…CFYFTVPVWD (214 aa)) folds into the Histidine kinase domain. H157 bears the Phosphohistidine; by autocatalysis mark.

As to quaternary structure, homooligomerizes. Interacts with KaiC. Participates in the KaiBC complex, whose core is composed of a KaiC homohexamer and 6 KaiB.

The catalysed reaction is ATP + protein L-histidine = ADP + protein N-phospho-L-histidine.. In terms of biological role, member of the two-component regulatory system SasA/RpaA involved in genome-wide circadian gene expression. One of several clock output pathways. Participates in the Kai clock protein complex, the main circadian regulator in cyanobacteria, via its interaction with KaiC. KaiC enhances the autophosphorylation activity of SasA, which then transfers its phosphate group to RpaA to activate it. In addition to its output function, recruits fold-shifted KaiB (KaiB(fs)) to KaiC to cooperatively form the KaiB(6):KaiC(6) complex (independent of SasA kinase activity). Required for robustness of the circadian rhythm of gene expression and is involved in clock output, also required for adaptation to light/dark cycles. The polypeptide is Adaptive-response sensory kinase SasA (Prochlorococcus marinus (strain SARG / CCMP1375 / SS120)).